Here is a 546-residue protein sequence, read N- to C-terminus: Chromosomal replication initiator protein DnaA (546 aa).

Residues 1-85 (MSDPQAALRA…TRALSQHMGR (85 aa)) are domain I, interacts with DnaA modulators. The interval 85–204 (RPCSLAVTIA…EPAHNPNREK (120 aa)) is domain II. Residues 96–111 (PPQPAPQEEPPAPAPQ) show a composition bias toward pro residues. The interval 96–209 (PPQPAPQEEP…PNREKSLNPK (114 aa)) is disordered. The span at 126–145 (QTQAFQQPTQSTQPAPASQP) shows a compositional bias: low complexity. Over residues 191–209 (IPREEPAHNPNREKSLNPK) the composition is skewed to basic and acidic residues. Residues 205-421 (SLNPKHTFEN…GALIRVSAYS (217 aa)) are domain III, AAA+ region. ATP contacts are provided by glycine 249, glycine 251, lysine 252, and threonine 253. Residues 422-546 (SLVNEPISLE…TQRVKNHNQR (125 aa)) form a domain IV, binds dsDNA region.

It belongs to the DnaA family. Oligomerizes as a right-handed, spiral filament on DNA at oriC.

It is found in the cytoplasm. Plays an essential role in the initiation and regulation of chromosomal replication. ATP-DnaA binds to the origin of replication (oriC) to initiate formation of the DNA replication initiation complex once per cell cycle. Binds the DnaA box (a 9 base pair repeat at the origin) and separates the double-stranded (ds)DNA. Forms a right-handed helical filament on oriC DNA; dsDNA binds to the exterior of the filament while single-stranded (ss)DNA is stabiized in the filament's interior. The ATP-DnaA-oriC complex binds and stabilizes one strand of the AT-rich DNA unwinding element (DUE), permitting loading of DNA polymerase. After initiation quickly degrades to an ADP-DnaA complex that is not apt for DNA replication. Binds acidic phospholipids. The chain is Chromosomal replication initiator protein DnaA from Corynebacterium aurimucosum (strain ATCC 700975 / DSM 44827 / CIP 107346 / CN-1) (Corynebacterium nigricans).